Reading from the N-terminus, the 358-residue chain is Putative spore germination protein YfkT (358 aa).

10 helical membrane-spanning segments follow: residues 10-30 (LFFG…ILMI), 36-56 (NAWH…WLMH), 81-101 (IIIL…IRFF), 107-127 (ILFL…FVAI), 143-163 (IFLF…ATQI), 179-199 (LQSG…PLLF), 210-230 (IFAI…SISV), 262-282 (IIAA…LYIV), 297-317 (AMYT…FLNT), and 326-346 (IKPI…YLII).

This sequence belongs to the amino acid-polyamine-organocation (APC) superfamily. Spore germination protein (SGP) (TC 2.A.3.9) family.

The protein resides in the cell membrane. May be involved in spore germination. The protein is Putative spore germination protein YfkT (yfkT) of Bacillus subtilis (strain 168).